Reading from the N-terminus, the 555-residue chain is Dihydroxy-acid dehydratase (555 aa).

A [2Fe-2S] cluster-binding site is contributed by C46. Residue D78 participates in Mg(2+) binding. Position 119 (C119) interacts with [2Fe-2S] cluster. Mg(2+)-binding residues include D120 and K121. K121 is modified (N6-carboxylysine). C191 is a [2Fe-2S] cluster binding site. E442 is a binding site for Mg(2+). S468 functions as the Proton acceptor in the catalytic mechanism.

Belongs to the IlvD/Edd family. As to quaternary structure, homodimer. [2Fe-2S] cluster serves as cofactor. Mg(2+) is required as a cofactor.

The catalysed reaction is (2R)-2,3-dihydroxy-3-methylbutanoate = 3-methyl-2-oxobutanoate + H2O. It catalyses the reaction (2R,3R)-2,3-dihydroxy-3-methylpentanoate = (S)-3-methyl-2-oxopentanoate + H2O. The protein operates within amino-acid biosynthesis; L-isoleucine biosynthesis; L-isoleucine from 2-oxobutanoate: step 3/4. It participates in amino-acid biosynthesis; L-valine biosynthesis; L-valine from pyruvate: step 3/4. Its function is as follows. Functions in the biosynthesis of branched-chain amino acids. Catalyzes the dehydration of (2R,3R)-2,3-dihydroxy-3-methylpentanoate (2,3-dihydroxy-3-methylvalerate) into 2-oxo-3-methylpentanoate (2-oxo-3-methylvalerate) and of (2R)-2,3-dihydroxy-3-methylbutanoate (2,3-dihydroxyisovalerate) into 2-oxo-3-methylbutanoate (2-oxoisovalerate), the penultimate precursor to L-isoleucine and L-valine, respectively. This is Dihydroxy-acid dehydratase from Thermus thermophilus (strain ATCC BAA-163 / DSM 7039 / HB27).